The following is a 328-amino-acid chain: Phosphatidylglycerol--prolipoprotein diacylglyceryl transferase (328 aa).

3 consecutive transmembrane segments (helical) span residues 15-35 (VIQGIPITWYSLSYILIILIS), 57-77 (IFMFSLVLGAILGGRLASTLV), and 106-126 (GMAIHGGFLGAIIAPLITINT). Arginine 156 serves as a coordination point for a 1,2-diacyl-sn-glycero-3-phospho-(1'-sn-glycerol). A run of 2 helical transmembrane segments spans residues 242-262 (GFIFGVYVMLYAFFRFFIEYL) and 289-309 (ISMGQILSLTLMLSGLIWIIV).

The protein belongs to the Lgt family.

It localises to the cell inner membrane. The enzyme catalyses L-cysteinyl-[prolipoprotein] + a 1,2-diacyl-sn-glycero-3-phospho-(1'-sn-glycerol) = an S-1,2-diacyl-sn-glyceryl-L-cysteinyl-[prolipoprotein] + sn-glycerol 1-phosphate + H(+). It participates in protein modification; lipoprotein biosynthesis (diacylglyceryl transfer). Catalyzes the transfer of the diacylglyceryl group from phosphatidylglycerol to the sulfhydryl group of the N-terminal cysteine of a prolipoprotein, the first step in the formation of mature lipoproteins. This chain is Phosphatidylglycerol--prolipoprotein diacylglyceryl transferase, found in Borreliella burgdorferi (strain ZS7) (Borrelia burgdorferi).